Here is a 204-residue protein sequence, read N- to C-terminus: Wound-induced proteinase inhibitor 2 (204 aa).

Positions 1-25 (MAVPKEVSFLASLLVLGILLLHVDA) are cleaved as a signal peptide. Tandem repeats lie at residues 25-67 (AKAC…DPNN), 68-125 (PKPC…DPNN), and 126-183 (PKPC…DPNH). 6 cysteine pairs are disulfide-bonded: cysteine 28-cysteine 100, cysteine 38-cysteine 75, cysteine 41-cysteine 59, cysteine 42-cysteine 71, cysteine 48-cysteine 84, and cysteine 99-cysteine 117. The stretch at 184-204 (PKACPKNCDPNIAYSLCLYEK) is one 4; truncated repeat.

It belongs to the protease inhibitor I20 (potato type II proteinase inhibitor) family.

In Capsicum annuum (Capsicum pepper), this protein is Wound-induced proteinase inhibitor 2 (PIN2).